An 843-amino-acid polypeptide reads, in one-letter code: Translation initiation factor IF-2 (843 aa).

Residues Gln94–Pro259 are disordered. A compositionally biased stretch (basic and acidic residues) spans Ser96–Arg135. Over residues Asn136–Ala177 the composition is skewed to low complexity. 2 stretches are compositionally biased toward basic and acidic residues: residues Asp178–Pro219 and Thr227–Arg236. Basic residues predominate over residues Arg237–Ala250. The 170-residue stretch at Ser343–Lys512 folds into the tr-type G domain. Residues Gly352 to Thr359 form a G1 region. Gly352 to Thr359 is a GTP binding site. Positions Gly377–His381 are G2. A G3 region spans residues Asp398–Gly401. GTP is bound by residues Asp398–His402 and Asn452–Asp455. Residues Asn452 to Asp455 form a G4 region. The interval Ser488 to Lys490 is G5.

This sequence belongs to the TRAFAC class translation factor GTPase superfamily. Classic translation factor GTPase family. IF-2 subfamily.

It localises to the cytoplasm. Functionally, one of the essential components for the initiation of protein synthesis. Protects formylmethionyl-tRNA from spontaneous hydrolysis and promotes its binding to the 30S ribosomal subunits. Also involved in the hydrolysis of GTP during the formation of the 70S ribosomal complex. The sequence is that of Translation initiation factor IF-2 from Pseudomonas savastanoi pv. phaseolicola (strain 1448A / Race 6) (Pseudomonas syringae pv. phaseolicola (strain 1448A / Race 6)).